Consider the following 348-residue polypeptide: Beta-hexosaminidase (348 aa).

Residues Asp64, Arg72, Arg138, and 168–169 (KH) each bind substrate. His181 serves as the catalytic Proton donor/acceptor. Asp252 serves as the catalytic Nucleophile.

It belongs to the glycosyl hydrolase 3 family. NagZ subfamily.

It is found in the cytoplasm. The catalysed reaction is Hydrolysis of terminal non-reducing N-acetyl-D-hexosamine residues in N-acetyl-beta-D-hexosaminides.. Its pathway is cell wall biogenesis; peptidoglycan recycling. Its function is as follows. Plays a role in peptidoglycan recycling by cleaving the terminal beta-1,4-linked N-acetylglucosamine (GlcNAc) from peptide-linked peptidoglycan fragments, giving rise to free GlcNAc, anhydro-N-acetylmuramic acid and anhydro-N-acetylmuramic acid-linked peptides. The chain is Beta-hexosaminidase from Nitrosomonas eutropha (strain DSM 101675 / C91 / Nm57).